Reading from the N-terminus, the 388-residue chain is MNLHEYQGKQLFAEYGLPVSKGIAAETPAEAAAAADIIGGDKWVVKAQVHAGGRGKAGGVKLVSSKAEIEEFAKKWLGNNLITYQTDENGQPVSRILVESCTDIADELYLGAVVDRSTRRVIFMASTEGGVEIEKVAEETPEKILKAIIDPLTGAQPYQARELGFKLGLNPVQIKQFTQIFLGLAKMFVDKDLALLEINPLVITDEGNLHCLDAKVAIDGNAMYRQPALKEMHDPSQEDEREAHAAKWELNYVALDGNIGCMVNGAGLAMGTMDIVKLHGGQPANFLDVGGGATKERVVEAFKIILSDDNVKAVLINIFGGIVRCDLIAEGVIGAVEEVGVKVPVVVRLEGNNAELGAKVLADSGLNIIAAESLTDAAVQVVKAAEGK.

In terms of domain architecture, ATP-grasp spans 9 to 244; sequence KQLFAEYGLP…PSQEDEREAH (236 aa). ATP contacts are provided by residues K46, 53-55, E99, T102, and E107; that span reads GRG. Residues N199 and D213 each coordinate Mg(2+). Substrate-binding positions include N264 and 321–323; that span reads GIV.

Belongs to the succinate/malate CoA ligase beta subunit family. As to quaternary structure, heterotetramer of two alpha and two beta subunits. Mg(2+) is required as a cofactor.

It carries out the reaction succinate + ATP + CoA = succinyl-CoA + ADP + phosphate. It catalyses the reaction GTP + succinate + CoA = succinyl-CoA + GDP + phosphate. It participates in carbohydrate metabolism; tricarboxylic acid cycle; succinate from succinyl-CoA (ligase route): step 1/1. Succinyl-CoA synthetase functions in the citric acid cycle (TCA), coupling the hydrolysis of succinyl-CoA to the synthesis of either ATP or GTP and thus represents the only step of substrate-level phosphorylation in the TCA. The beta subunit provides nucleotide specificity of the enzyme and binds the substrate succinate, while the binding sites for coenzyme A and phosphate are found in the alpha subunit. This Saccharophagus degradans (strain 2-40 / ATCC 43961 / DSM 17024) protein is Succinate--CoA ligase [ADP-forming] subunit beta.